A 565-amino-acid chain; its full sequence is MHIIFQYPIVDLRDIVSGGNGRLNDPKWPDPQERRQSFVSGFGKVKSRNLGGSDNFTGESYYCDSHSAIKFKELQHQGFSEGITTPASIFNSYRRYYNDGRFVGKVEIGLIDNLEKIIRNYPGSEGIQISSILKHYSNLEATVEDEQVKLYKAGPRLSKKYQRESTLREKHFQINPDYVQTGELTIVLTYSSHERLIVPRRSFSLEKIELPNDAGSIELFGYKLKQDGYPTKVWIIKIPANFRSKSGKHKTILRDLRMNLLRIHLEKETIKILLNAIKYKQIELEKESAEAKQVNAYFEQTSKKLFRKSRYDIKQENLLDFALQSEKSMDKGSFNSLKENITYFQDEFMLDNLGKLVGSMAVKPMLFVCSNPRDSNFIDFDKEYKDLKYNLQRAIDRDHYDIEIELSVTKDEFKDILDRYKPQFLHLSMHATVKDGLHFEDKNKAILPMSVKEFKQIIERYTKKHELKLVLISACNSKNHAKAIKEYCDFAIGTKAVFPVPAALIYSNNFYTTLFNGYQKDLEYCHSGAINAIEFNNPKFDDLDYKNKKIRVHEIPVLIKNSKYV.

Probably a dedicated protease for substrate gasdermin bGSDM; cleaves the bGSDM precursor, releasing the pore-forming moiety, which integrates into the membrane and triggers cell death. Involved in defense against bacteriophages. Expression of bGSDM and this neighboring protease is not toxic in E.coli. The sequence is that of Probable protease Gilli_2517 from Gillisia limnaea (strain DSM 15749 / LMG 21470 / R-8282).